The following is a 232-amino-acid chain: Histone H1-II (232 aa).

The segment covering 1-18 (MSDPAPEVAPAAPVASPA) has biased composition (low complexity). Disordered regions lie at residues 1–44 (MSDP…PPVS) and 103–232 (GKGA…AKKA). The H15 domain occupies 39-114 (THPPVSEMVV…GASGSFKLPA (76 aa)). 2 stretches are compositionally biased toward basic residues: residues 149–171 (SIAK…KSTK) and 179–232 (AAKK…AKKA).

Belongs to the histone H1/H5 family.

It localises to the nucleus. Its subcellular location is the chromosome. In terms of biological role, histones H1 are necessary for the condensation of nucleosome chains into higher-order structures. This is Histone H1-II from Glyptotendipes barbipes (Midge).